Consider the following 367-residue polypeptide: DNA replication and repair protein RecF (367 aa).

30 to 37 contributes to the ATP binding site; it reads GDNAQGKT.

The protein belongs to the RecF family.

Its subcellular location is the cytoplasm. Its function is as follows. The RecF protein is involved in DNA metabolism; it is required for DNA replication and normal SOS inducibility. RecF binds preferentially to single-stranded, linear DNA. It also seems to bind ATP. The polypeptide is DNA replication and repair protein RecF (Clostridium beijerinckii (strain ATCC 51743 / NCIMB 8052) (Clostridium acetobutylicum)).